The following is an 807-amino-acid chain: Leucine--tRNA ligase (807 aa).

Residues 38-49 (PYPSGSGLHVGH) carry the 'HIGH' region motif. A 'KMSKS' region motif is present at residues 579–583 (KMSKS). Lys582 lines the ATP pocket.

It belongs to the class-I aminoacyl-tRNA synthetase family.

Its subcellular location is the cytoplasm. The enzyme catalyses tRNA(Leu) + L-leucine + ATP = L-leucyl-tRNA(Leu) + AMP + diphosphate. This chain is Leucine--tRNA ligase, found in Mycoplasmopsis pulmonis (strain UAB CTIP) (Mycoplasma pulmonis).